Here is a 180-residue protein sequence, read N- to C-terminus: Peptide deformylase (180 aa).

The Fe cation site is built by Cys96 and His138. The active site involves Glu139. His142 contacts Fe cation.

This sequence belongs to the polypeptide deformylase family. The cofactor is Fe(2+).

The catalysed reaction is N-terminal N-formyl-L-methionyl-[peptide] + H2O = N-terminal L-methionyl-[peptide] + formate. Functionally, removes the formyl group from the N-terminal Met of newly synthesized proteins. Requires at least a dipeptide for an efficient rate of reaction. N-terminal L-methionine is a prerequisite for activity but the enzyme has broad specificity at other positions. In Rhodopseudomonas palustris (strain BisA53), this protein is Peptide deformylase.